The following is a 560-amino-acid chain: SET domain-containing protein 4 (560 aa).

Disordered stretches follow at residues 1–61 (MTSP…PSPQ) and 125–157 (KKQNQDDNSKVSVTHNESSKENKITPSMRAEDN). Positions 26–38 (SRSSSYSSNSSMS) are enriched in low complexity. Polar residues predominate over residues 47 to 59 (LSVSSAASETLPS). Positions 141 to 157 (ESSKENKITPSMRAEDN) are enriched in basic and acidic residues. A PHD-type zinc finger spans residues 160 to 210 (KNGCICGSSDSKDELFIQCNKCKTWQHKLCYAFKKSDPIKRDFVCKRCDSD). The SET domain maps to 346–475 (ADIEVRKSSN…KGEEISVEWQ (130 aa)).

The protein belongs to the SET3 family.

Its function is as follows. Putative chromatin regulator. The chain is SET domain-containing protein 4 (SET4) from Saccharomyces cerevisiae (strain ATCC 204508 / S288c) (Baker's yeast).